Reading from the N-terminus, the 59-residue chain is MLNIFSLIGLNSALYSSSCFFAKLPEAYAFLSPIVDFMPVIPLLFFLLAFVWQAAVSFR.

The propeptide occupies 1–22; it reads MLNIFSLIGLNSALYSSSCFFA. The helical transmembrane segment at 30 to 50 threads the bilayer; that stretch reads FLSPIVDFMPVIPLLFFLLAF.

It belongs to the PsbK family. In terms of assembly, PSII is composed of 1 copy each of membrane proteins PsbA, PsbB, PsbC, PsbD, PsbE, PsbF, PsbH, PsbI, PsbJ, PsbK, PsbL, PsbM, PsbT, PsbX, PsbY, PsbZ, Psb30/Ycf12, at least 3 peripheral proteins of the oxygen-evolving complex and a large number of cofactors. It forms dimeric complexes.

The protein resides in the plastid. It is found in the chloroplast thylakoid membrane. One of the components of the core complex of photosystem II (PSII). PSII is a light-driven water:plastoquinone oxidoreductase that uses light energy to abstract electrons from H(2)O, generating O(2) and a proton gradient subsequently used for ATP formation. It consists of a core antenna complex that captures photons, and an electron transfer chain that converts photonic excitation into a charge separation. In Silene latifolia (White campion), this protein is Photosystem II reaction center protein K.